The following is a 102-amino-acid chain: Bowman-Birk type wound-induced proteinase inhibitor WIP1 (102 aa).

The first 15 residues, 1-15 (MKSSPHLVLILCLQA), serve as a signal peptide directing secretion. Intrachain disulfides connect Cys-46–Cys-102, Cys-47–Cys-60, Cys-50–Cys-98, Cys-67–Cys-74, and Cys-71–Cys-90.

This sequence belongs to the Bowman-Birk serine protease inhibitor family.

This chain is Bowman-Birk type wound-induced proteinase inhibitor WIP1 (WIP1), found in Zea mays (Maize).